The primary structure comprises 184 residues: Probable S-adenosyl-L-methionine-binding protein PYRAB06630 (184 aa).

The TsaA-like domain maps to 9-140 (YRPIGIIHSP…YVPEFDVREN (132 aa)). S-adenosyl-L-methionine is bound by residues 26 to 28 (PIQ), 65 to 66 (HR), Arg-89, and 120 to 123 (LDGT).

It belongs to the tRNA methyltransferase O family.

This chain is Probable S-adenosyl-L-methionine-binding protein PYRAB06630, found in Pyrococcus abyssi (strain GE5 / Orsay).